Here is a 683-residue protein sequence, read N- to C-terminus: Protein zntD (683 aa).

The next 3 helical transmembrane spans lie at isoleucine 12–methionine 32, leucine 42–phenylalanine 62, and proline 79–isoleucine 99. Residues valine 120 to histidine 129 show a composition bias toward basic residues. 4 disordered regions span residues valine 120 to threonine 180, glycine 299 to asparagine 325, cysteine 364 to threonine 390, and isoleucine 451 to asparagine 489. A compositionally biased stretch (gly residues) spans glycine 137–serine 149. Low complexity-rich tracts occupy residues threonine 160 to threonine 180 and asparagine 302 to asparagine 325. Residues isoleucine 451–asparagine 465 show a composition bias toward low complexity. The segment covering asparagine 466–asparagine 475 has biased composition (gly residues). The segment covering serine 476–asparagine 489 has biased composition (low complexity). Transmembrane regions (helical) follow at residues isoleucine 534 to alanine 554, valine 564 to isoleucine 584, phenylalanine 600 to isoleucine 620, proline 631 to isoleucine 651, and isoleucine 662 to tryptophan 682.

This sequence belongs to the ZIP transporter (TC 2.A.5) family.

It localises to the membrane. Its function is as follows. May transport divalent cations. May participate, with dstA, in the regulation of the differentiation of stalk cells during development. The sequence is that of Protein zntD (zntD) from Dictyostelium discoideum (Social amoeba).